The following is a 373-amino-acid chain: uncharacterized protein (373 aa).

A helical transmembrane segment spans residues 180–202 (YYVVALGTLALGSILGYTAKYVW).

Its subcellular location is the membrane. This is an uncharacterized protein from Rickettsia prowazekii (strain Madrid E).